We begin with the raw amino-acid sequence, 230 residues long: MTGLHQLISLLHLASPALPIGGFSYSQGLEAAIECGSVHDAPTAERWIGDNLRHVQAQCEAPLWLLLHRHWQAGDAVRVRSWNDWFHATRETSELRLETEQMGWSLARLIAQMEWGTPALRETLAALSPVCLPTAFTAACVALEIGARDGLAAYCFNWAENQVAAAIKAVPLGQVAGQHMLRRLHGAVLDTVDEACRRAEATPPQLSTFSPMLGLLCARHETQYSRLFRS.

The protein belongs to the UreF family. As to quaternary structure, ureD, UreF and UreG form a complex that acts as a GTP-hydrolysis-dependent molecular chaperone, activating the urease apoprotein by helping to assemble the nickel containing metallocenter of UreC. The UreE protein probably delivers the nickel.

The protein localises to the cytoplasm. Required for maturation of urease via the functional incorporation of the urease nickel metallocenter. The polypeptide is Urease accessory protein UreF (Cupriavidus taiwanensis (strain DSM 17343 / BCRC 17206 / CCUG 44338 / CIP 107171 / LMG 19424 / R1) (Ralstonia taiwanensis (strain LMG 19424))).